A 673-amino-acid polypeptide reads, in one-letter code: Inactive polyglycylase TTLL10 (673 aa).

The segment at 1–132 (MDHSCTRFIH…ADSDDTNAAG (132 aa)) is disordered. Residues 8-36 (FIHRRGPPTRTRAGFKRGKRPRIQQRPRA) show a composition bias toward basic residues. The segment covering 52 to 62 (ASQPGPCPAPG) has biased composition (pro residues). Over residues 89–105 (PDHDADGHCGPDLEGAE) the composition is skewed to basic and acidic residues. The TTL domain maps to 155–552 (PGPFFYIGGS…TFRKSLRGQK (398 aa)). ATP is bound by residues 362–365 (QRYI), Lys375, and Asp377. Positions 569 to 673 (EADPRPHLGG…EREEPENARP (105 aa)) are disordered. Over residues 612-627 (PAPPPLVPQRPRPPGP) the composition is skewed to pro residues. Over residues 661–673 (AKEEREEPENARP) the composition is skewed to basic and acidic residues.

In terms of biological role, inactive polyglycylase. The sequence is that of Inactive polyglycylase TTLL10 from Homo sapiens (Human).